We begin with the raw amino-acid sequence, 2144 residues long: MTDPGCPERRTLCFLSTLLSQKVPEKSDVVLRCMIAGQPKPEVTWYKNGQAIDLGGTVSSYEFFENQYIHLLHLSCCTQSDAAVYQVSARNCVGMICCSASLEVQCLQDPQVSPDPGGGRDAAGECKTEIREEDSINHTDEKWNPCKKGESTADSFLDKFNHLSSPQIVARGDSGASNSENPQYIKETRQRMGQYNSNNMQENSFNSNNTAEKQDVSQLWTVNATVPGLVSDGLGYEESNESVSPSHQTPKVQKYISFSLPLPETTLGPYPEDSNSINMQPGPQVSSEDSDSDYELCPEITLTYTEEFSDDDLEYLECSDVMTDYSNAVWQRSLQGTDRVFLLESDDEEMEFNECGLGGCEHFFTEMGCGPQVSGGMWSMNVATGFCSYHSQPQEVRVRSSGTSGHSPLPLHSEMTLTLGPHQDETAKMTEPGRAPLPTAPEAVENDCSGIRGETRDNPEAGEEFSGDNLQTMDKVETEASVKPLSGGSDKTEVKQGLESLARERTDEKYPGSKKAALRPTRARRPGMKANTKKQLLRDSAPKGTLDLLPKEPTRQPLPGSYGQEPTHTEAGAPGWDSHFHAEVCIPLPAEQDSKILRPPADPLSKEEDSSFEGGGALLNKLFEASQIPDRTDHLQMQIQETIGESSSLDQMLAFSVPAEESSTFAGATTHSVSNLSEINRENLSLAQYPGLESCPQSLQQEGRPNRDRDLPGALWAESACELSLLEDNEEEESQPPASVALPQGDGVPCREPEGLSDSFPQPTAPSLPLENVGSGSRVREAAGGVGCFEAGDQETCYATMDLLVGAPVDKYLPQEICPEDLELTEGQSEVCDLCSPDKILAVLQTQGSEPPRSTDKRSQDGKSAEGLLFNSTFTWDTAKEASEDAVGETAADVENPPSTFSSTLPYSERGFGETQPLCSETISFVKDSEGSYRSSSLSIPAAIDTLASYSSDRECSKEQSAESTANVDCHQVTREMEGISTNAAEVHEIKCHSVSVPQDNDFDVGADQVSCEARDEDNSQSLPDDDSQSGRSLSSSTGEATGETLVPAPSSAGDHGHFSMPEGQGLCSRALQMDNQPVCQSQAMEGAHSRGLEEHFQEKGSGMKHGIRPQSTSHQVSLSANDFQEILPSIPTMQQETNVEPLEHSLADSREEIECSSDPRTSDLVVAEKTVGEDSHLVVSVPALPDILLGEKDDVGLGSWAVGGKVKIITLEAPVFEIWPPELVRHPGYKEAEAGLTMPGRSWALSDILRAGATRSEPGALGGAAWVPSPQADALMALGANRDTWLGAAPDRQANCNCLSSQCLSQPRFLESSVDPVEDKELEVTDSPSEVSKTGEMEMPETLNEEQEETQQILRHPAVVNQSVNFPRILESSVDPIDDRGELEGVWPEKPEPSDSSVEGNEFIVGNTCQRVDIQPASLQLPHPQDSGEIIPYEHTTNQNRVDGERAEAKTSLPDKAKAEAEAVVWQAQGPGEEGQGIPSVCSMSQTQDGGDRSLGEAGQRGTDETEVISPLSPLSSCLTGVTHTCVKAETNNSTGHIYGGSEPRTRQSVIPMKTEKGTIESKCGNHVRSSDDLTNTPCTSSPKGNVTRLSISHGLEELKSEKLQIAETKPLNSSDSPTMTLALISGECESEKDPKSLLRRDPCPKGSTLDSGKKSRDQQQKPVAAQVSKAPGDQSAMAGSEEGKKKQEASGSGHLTAGIKKKILSRVAALRLRLEEKENSRKNSIVKKTPKFERSLSRTDEKRDPKRAPCKAEGKAPVLLKRIQAEMAPEHSGNIKLSCQFSEIHEDSTVCWTKDSKSIAQAKKSAGDNSSVSLAIVQAGQKDQGLYYCCLKNSYGKVTAEFNLTAEVLKQLSSHTEYRGCEEIEFSQLIFKEDVFNDSYFGDHLRGQISTEELHFGEGVHRKAFRSKVMQGLMPVFQPGHACVLKVHNAVAHGTRNNDELVQRNYKLAAQECYVQNTARYYAKIYAAEAQPLEGFGEVPEIIPIFLIHRPENNIPYATVEEELIGEFVKYSIRDGKEINFLRRDSEAGQKCCTFQHWVYQKTSGCLLVTDMQGVGMKLTDVGIATLARGYKGFKGNCSMTFIDQFRALHQCNKYCKMLGLKSLQNNSQKPKKPIVGKGRVPTNATQVKTPESETPPAERKT.

In terms of domain architecture, Ig-like 1 spans 7 to 105 (PERRTLCFLS…ICCSASLEVQ (99 aa)). Cysteine 33 and cysteine 98 are joined by a disulfide. Disordered regions lie at residues 425-473 (ETAK…LQTM), 500-575 (SLAR…GAPG), 727-775 (EDNE…NVGS), 845-864 (QTQGSEPPRSTDKRSQDGKS), 881-907 (EASEDAVGETAADVENPPSTFSSTLPY), 1011-1065 (SCEA…PEGQ), 1316-1340 (DPVEDKELEVTDSPSEVSKTGEMEM), 1471-1509 (GPGEEGQGIPSVCSMSQTQDGGDRSLGEAGQRGTDETEV), 1565-1587 (CGNHVRSSDDLTNTPCTSSPKGN), 1629-1696 (ECES…GSGH), and 1720-1754 (ENSRKNSIVKKTPKFERSLSRTDEKRDPKRAPCKA). Positions 500–511 (SLARERTDEKYP) are enriched in basic and acidic residues. Residues 853-864 (RSTDKRSQDGKS) are compositionally biased toward basic and acidic residues. The span at 897–906 (PPSTFSSTLP) shows a compositional bias: polar residues. Polar residues predominate over residues 1574-1587 (DLTNTPCTSSPKGN). Basic and acidic residues-rich tracts occupy residues 1631 to 1645 (ESEKDPKSLLRRDPC) and 1732 to 1754 (PKFERSLSRTDEKRDPKRAPCKA). The 89-residue stretch at 1759-1847 (PVLLKRIQAE…GKVTAEFNLT (89 aa)) folds into the Ig-like 2 domain. Cysteine 1781 and cysteine 1831 are joined by a disulfide. In terms of domain architecture, Alpha-type protein kinase spans 1874-2106 (KEDVFNDSYF…YCKMLGLKSL (233 aa)). Positions 2109–2144 (NSQKPKKPIVGKGRVPTNATQVKTPESETPPAERKT) are disordered.

Belongs to the protein kinase superfamily. Alpha-type protein kinase family. ALPK subfamily.

It localises to the basolateral cell membrane. It catalyses the reaction L-seryl-[protein] + ATP = O-phospho-L-seryl-[protein] + ADP + H(+). The enzyme catalyses L-threonyl-[protein] + ATP = O-phospho-L-threonyl-[protein] + ADP + H(+). Protein kinase that recognizes phosphorylation sites in which the surrounding peptides have an alpha-helical conformation. Regulates cardiac development and cardiomyocyte differentiation by negatively regulating Wnt/beta-catenin signaling. The chain is Alpha-protein kinase 2 from Mus musculus (Mouse).